The sequence spans 130 residues: Small ribosomal subunit protein bS18 (130 aa).

Basic and acidic residues-rich tracts occupy residues 98 to 108 (KKMEESVKSAE) and 117 to 130 (EESK…AKTE). The tract at residues 98 to 130 (KKMEESVKSAEPKATAEATEESKPKRTRKAKTE) is disordered.

Belongs to the bacterial ribosomal protein bS18 family. In terms of assembly, part of the 30S ribosomal subunit. Forms a tight heterodimer with protein bS6.

In terms of biological role, binds as a heterodimer with protein bS6 to the central domain of the 16S rRNA, where it helps stabilize the platform of the 30S subunit. In Metamycoplasma arthritidis (strain 158L3-1) (Mycoplasma arthritidis), this protein is Small ribosomal subunit protein bS18.